Reading from the N-terminus, the 2303-residue chain is Genome polyprotein (2303 aa).

Residues 3-14 (CKHGYPDVCPIC) fold into a zinc finger. Residues 30-46 (DGEWYPTDLLCVDLDDD) are acidic. Positions 60-73 (MDWTDVPLIRDIVM) are theilo. Positions 74–93 (EPQGNSSSSDKSNSQSSGNE) are disordered. Residue glycine 77 is the site of N-myristoyl glycine; by host attachment. Residues 78 to 92 (NSSSSDKSNSQSSGN) show a composition bias toward low complexity. The cysteines at positions 501 and 503 are disulfide-linked. The host EIF4E binding stretch occupies residues 1041–1047 (YYRQRLI). The region spanning 1283-1448 (IPLASLCEKF…CKTPAGMLDV (166 aa)) is the SF3 helicase domain. 1312-1319 (GAAGQGKS) lines the ATP pocket. At tyrosine 1608 the chain carries O-(5'-phospho-RNA)-tyrosine. In terms of domain architecture, Peptidase C3 spans 1636–1829 (NPVMDFELFC…AATIITKELI (194 aa)). Residues histidine 1680, aspartate 1714, and cysteine 1793 each act as for protease 3C activity in the active site. One can recognise a RdRp catalytic domain in the interval 2071–2189 (NYVYDVDYSN…GTNYQIDFNL (119 aa)). Residues aspartate 2077 and aspartate 2175 each act as for RdRp activity in the active site.

This sequence belongs to the picornaviruses polyprotein family. As to quaternary structure, interacts with host EIF4E. Interacts with the leader protein. In terms of assembly, interacts with host RAN; the complex L-RAN recruits cellular kinases responsible for the L-induced nucleocytoplasmic trafficking inhibition. The complex L-RAN can further bind to the host exportins XPO1/CRM1 and CSE1L/CAS. Interacts with the protein 2A. Interacts with host RNASEL; this interaction prevents RNASEL activation by its substrate 2'-5' oligoadenylates. Post-translationally, phosphorylated. In terms of processing, specific enzymatic cleavages by the viral protease in vivo yield a variety of precursors and mature proteins. The polyprotein seems to be cotranslationally cleaved at the 2A/2B junction by a ribosomal skip from one codon to the next without formation of a peptide bond. This process would release the P1-2A peptide from the translational complex. During virion maturation, immature virions are rendered infectious following cleavage of VP0 into VP4 and VP2. This maturation seems to be an autocatalytic event triggered by the presence of RNA in the capsid and is followed by a conformational change of the particle. Post-translationally, uridylylated by the polymerase and is covalently linked to the 5'-end of genomic RNA. This uridylylated form acts as a nucleotide-peptide primer for the polymerase. In terms of processing, myristoylation is required during RNA encapsidation and formation of the mature virus particle.

The protein localises to the virion. It is found in the host cytoplasm. It localises to the host nucleus. The protein resides in the host nucleolus. Its subcellular location is the host cytoplasmic vesicle membrane. The enzyme catalyses RNA(n) + a ribonucleoside 5'-triphosphate = RNA(n+1) + diphosphate. It catalyses the reaction ATP + H2O = ADP + phosphate + H(+). The catalysed reaction is Selective cleavage of Gln-|-Gly bond in the poliovirus polyprotein. In other picornavirus reactions Glu may be substituted for Gln, and Ser or Thr for Gly.. Functionally, forms a complex with host RAN and probably binds to exportins carrying activated MAPK in order to mediate the hyperphosphorylation of host Phe/Gly containing nuclear pore proteins (Nups) resulting in cessation of active nucleocytoplasmic transport. Proteins with NLS signals fail to import, cellular mRNAs fail to export, and some proteins small enough for diffusion are not retained anymore (efflux). The resulting inhibition of cellular protein synthesis serves to ensure maximal viral gene expression and to evade host immune response. The leader protein also inhibits host interferon regulatory factor 3 (IRF3) dimerization, thereby blocking the transcriptional activation of IFN genes. Binds to host RNase L thereby preventing its activation by 2'-5' oligoadenylates in order to counteract the antiviral interferon-inducible OAS/RNase L pathway. Inhibits the integrated stress response (ISR) in the infected cell. Inhibits the host EIF2AK2/PKR by rendering this kinase unable to detect double-stranded RNA. Also impairs host stress granule formation probably by acting on a step downstream of EIF2AK2/PKR activation. Its function is as follows. Forms an icosahedral capsid of pseudo T=3 symmetry with capsid proteins VP2 and VP3. Together they form an icosahedral capsid composed of 60 copies of each VP1, VP2, and VP3, with a diameter of approximately 300 Angstroms. VP4 lies on the inner surface of the protein shell formed by VP1, VP2 and VP3. All the three latter proteins contain a beta-sheet structure called beta-barrel jelly roll. VP1 is situated at the 12 fivefold axes, whereas VP2 and VP3 are located at the quasi-sixfold axes. Lies on the inner surface of the capsid shell. After binding to the host receptor, the capsid undergoes conformational changes. Capsid protein VP4 is released, capsid protein VP1 N-terminus is externalized, and together, they shape a pore in the host membrane through which the viral genome is translocated into the host cell cytoplasm. After genome has been released, the channel shrinks. In terms of biological role, VP0 precursor is a component of immature procapsids. Functionally, involved in host translation shutoff by inhibiting cap-dependent mRNA translation. Nuclear localization is required for this function. The resulting inhibition of cellular protein synthesis serves to ensure maximal viral gene expression and to evade host immune response. Inhibits the phosphorylation of the leader protein. Its function is as follows. Affects membrane integrity and causes an increase in membrane permeability. Associates with and induces structural rearrangements of intracellular membranes. It displays RNA-binding, nucleotide binding and NTPase activities. In terms of biological role, serves as membrane anchor via its hydrophobic domain. Functionally, forms a primer, VPg-pU, which is utilized by the polymerase for the initiation of RNA chains. Its function is as follows. Cysteine protease that generates mature viral proteins from the precursor polyprotein. In addition to its proteolytic activity, it binds to viral RNA, and thus influences viral genome replication. RNA and substrate cooperatively bind to the protease. Cleaves host PABP1, this cleavage is important for viral replication. Replicates the genomic and antigenomic RNAs by recognizing replications specific signals. Performs VPg uridylylation. This chain is Genome polyprotein, found in Mus musculus (Mouse).